The primary structure comprises 228 residues: Cytochrome c oxidase subunit 2 (228 aa).

Topologically, residues 1-14 (MANHSQLGFQDASS) are mitochondrial intermembrane. The chain crosses the membrane as a helical span at residues 15–45 (PIMEELVEFHDHALIVALAICSLVLYLLAHM). The Mitochondrial matrix segment spans residues 46-58 (LMEKLSSNAVDAQ). A helical membrane pass occupies residues 59–86 (EVELIWTILPAIVLVLLALPSLQILYMM). Topologically, residues 87-228 (DEIDEPDLTL…ETWSSLLSAS (142 aa)) are mitochondrial intermembrane. Residues H160, C195, E197, C199, H203, and M206 each coordinate Cu cation. E197 is a binding site for Mg(2+).

It belongs to the cytochrome c oxidase subunit 2 family. Component of the cytochrome c oxidase (complex IV, CIV), a multisubunit enzyme composed of 14 subunits. The complex is composed of a catalytic core of 3 subunits MT-CO1, MT-CO2 and MT-CO3, encoded in the mitochondrial DNA, and 11 supernumerary subunits COX4I, COX5A, COX5B, COX6A, COX6B, COX6C, COX7A, COX7B, COX7C, COX8 and NDUFA4, which are encoded in the nuclear genome. The complex exists as a monomer or a dimer and forms supercomplexes (SCs) in the inner mitochondrial membrane with NADH-ubiquinone oxidoreductase (complex I, CI) and ubiquinol-cytochrome c oxidoreductase (cytochrome b-c1 complex, complex III, CIII), resulting in different assemblies (supercomplex SCI(1)III(2)IV(1) and megacomplex MCI(2)III(2)IV(2)). Found in a complex with TMEM177, COA6, COX18, COX20, SCO1 and SCO2. Interacts with TMEM177 in a COX20-dependent manner. Interacts with COX20. Interacts with COX16. Cu cation is required as a cofactor.

The protein localises to the mitochondrion inner membrane. It catalyses the reaction 4 Fe(II)-[cytochrome c] + O2 + 8 H(+)(in) = 4 Fe(III)-[cytochrome c] + 2 H2O + 4 H(+)(out). Its function is as follows. Component of the cytochrome c oxidase, the last enzyme in the mitochondrial electron transport chain which drives oxidative phosphorylation. The respiratory chain contains 3 multisubunit complexes succinate dehydrogenase (complex II, CII), ubiquinol-cytochrome c oxidoreductase (cytochrome b-c1 complex, complex III, CIII) and cytochrome c oxidase (complex IV, CIV), that cooperate to transfer electrons derived from NADH and succinate to molecular oxygen, creating an electrochemical gradient over the inner membrane that drives transmembrane transport and the ATP synthase. Cytochrome c oxidase is the component of the respiratory chain that catalyzes the reduction of oxygen to water. Electrons originating from reduced cytochrome c in the intermembrane space (IMS) are transferred via the dinuclear copper A center (CU(A)) of subunit 2 and heme A of subunit 1 to the active site in subunit 1, a binuclear center (BNC) formed by heme A3 and copper B (CU(B)). The BNC reduces molecular oxygen to 2 water molecules using 4 electrons from cytochrome c in the IMS and 4 protons from the mitochondrial matrix. The chain is Cytochrome c oxidase subunit 2 (MT-CO2) from Cairina moschata (Muscovy duck).